We begin with the raw amino-acid sequence, 286 residues long: S-methyl-5'-thioadenosine phosphorylase (286 aa).

Phosphate is bound by residues serine 11, 53 to 54 (RH), and 86 to 87 (SA). Methionine 185 contributes to the substrate binding site. Position 186 (threonine 186) interacts with phosphate. Residue 209 to 211 (DYD) coordinates substrate.

This sequence belongs to the PNP/MTAP phosphorylase family. MTAP subfamily. In terms of assembly, homohexamer. Dimer of a homotrimer.

It catalyses the reaction S-methyl-5'-thioadenosine + phosphate = 5-(methylsulfanyl)-alpha-D-ribose 1-phosphate + adenine. It functions in the pathway amino-acid biosynthesis; L-methionine biosynthesis via salvage pathway; S-methyl-5-thio-alpha-D-ribose 1-phosphate from S-methyl-5'-thioadenosine (phosphorylase route): step 1/1. Its function is as follows. Catalyzes the reversible phosphorylation of S-methyl-5'-thioadenosine (MTA) to adenine and 5-methylthioribose-1-phosphate. Involved in the breakdown of MTA, a major by-product of polyamine biosynthesis. Responsible for the first step in the methionine salvage pathway after MTA has been generated from S-adenosylmethionine. Has broad substrate specificity with 6-aminopurine nucleosides as preferred substrates. This is S-methyl-5'-thioadenosine phosphorylase from Geobacter sulfurreducens (strain ATCC 51573 / DSM 12127 / PCA).